A 275-amino-acid chain; its full sequence is Translation initiation factor 2 subunit alpha (275 aa).

The region spanning 12–83 is the S1 motif domain; sequence GEFVVATVKR…RKGHIDLSLR (72 aa).

Belongs to the eIF-2-alpha family. Heterotrimer composed of an alpha, a beta and a gamma chain.

In terms of biological role, eIF-2 functions in the early steps of protein synthesis by forming a ternary complex with GTP and initiator tRNA. In Pyrococcus abyssi (strain GE5 / Orsay), this protein is Translation initiation factor 2 subunit alpha (eif2a).